A 235-amino-acid polypeptide reads, in one-letter code: Small ribosomal subunit protein uS2 (235 aa).

It belongs to the universal ribosomal protein uS2 family.

This chain is Small ribosomal subunit protein uS2, found in Caldanaerobacter subterraneus subsp. tengcongensis (strain DSM 15242 / JCM 11007 / NBRC 100824 / MB4) (Thermoanaerobacter tengcongensis).